The sequence spans 303 residues: Acetylglutamate kinase (303 aa).

Residues 73 to 74 (GG), R95, and N194 contribute to the substrate site.

It belongs to the acetylglutamate kinase family. ArgB subfamily.

It is found in the cytoplasm. The catalysed reaction is N-acetyl-L-glutamate + ATP = N-acetyl-L-glutamyl 5-phosphate + ADP. It participates in amino-acid biosynthesis; L-arginine biosynthesis; N(2)-acetyl-L-ornithine from L-glutamate: step 2/4. In terms of biological role, catalyzes the ATP-dependent phosphorylation of N-acetyl-L-glutamate. The chain is Acetylglutamate kinase from Saccharopolyspora erythraea (strain ATCC 11635 / DSM 40517 / JCM 4748 / NBRC 13426 / NCIMB 8594 / NRRL 2338).